The sequence spans 136 residues: Large ribosomal subunit protein uL16 (136 aa).

This sequence belongs to the universal ribosomal protein uL16 family. As to quaternary structure, part of the 50S ribosomal subunit.

Its function is as follows. Binds 23S rRNA and is also seen to make contacts with the A and possibly P site tRNAs. The polypeptide is Large ribosomal subunit protein uL16 (Buchnera aphidicola subsp. Cinara cedri (strain Cc)).